Reading from the N-terminus, the 372-residue chain is Flagellar P-ring protein (372 aa).

Positions 1-26 are cleaved as a signal peptide; that stretch reads MNLSSLPHRLLAAAVALCAIAAPASA.

It belongs to the FlgI family. In terms of assembly, the basal body constitutes a major portion of the flagellar organelle and consists of four rings (L,P,S, and M) mounted on a central rod.

The protein resides in the periplasm. It is found in the bacterial flagellum basal body. In terms of biological role, assembles around the rod to form the L-ring and probably protects the motor/basal body from shearing forces during rotation. The polypeptide is Flagellar P-ring protein (Xanthomonas campestris pv. campestris (strain ATCC 33913 / DSM 3586 / NCPPB 528 / LMG 568 / P 25)).